Reading from the N-terminus, the 413-residue chain is Acetate kinase (413 aa).

Residue N7 coordinates Mg(2+). K14 is an ATP binding site. Substrate is bound at residue R98. The active-site Proton donor/acceptor is D157. ATP-binding positions include 216-220, 291-293, and 339-343; these read HIGNG, DLR, and GVGEN. E392 contributes to the Mg(2+) binding site.

Belongs to the acetokinase family. Homodimer. The cofactor is Mg(2+). Mn(2+) is required as a cofactor.

The protein localises to the cytoplasm. The catalysed reaction is acetate + ATP = acetyl phosphate + ADP. It participates in metabolic intermediate biosynthesis; acetyl-CoA biosynthesis; acetyl-CoA from acetate: step 1/2. Functionally, catalyzes the formation of acetyl phosphate from acetate and ATP. Can also catalyze the reverse reaction. The polypeptide is Acetate kinase (Synechocystis sp. (strain ATCC 27184 / PCC 6803 / Kazusa)).